The chain runs to 198 residues: Putative coiled-coil domain-containing protein 196 (198 aa).

Residues 24–117 (NYLKELNEDL…RKEMEMLWNK (94 aa)) are a coiled coil. Composition is skewed to basic and acidic residues over residues 135-144 (NKTDLQDGKA) and 154-167 (TKNE…EKGK). Residues 135–198 (NKTDLQDGKA…VSGTSQHHSE (64 aa)) are disordered. A compositionally biased stretch (polar residues) spans 187–198 (GQVSGTSQHHSE).

The polypeptide is Putative coiled-coil domain-containing protein 196 (Bos taurus (Bovine)).